The primary structure comprises 329 residues: Olfactory receptor 5AL1 (329 aa).

Residues Met-1–Phe-44 lie on the Extracellular side of the membrane. Asn-21 carries N-linked (GlcNAc...) asparagine glycosylation. The helical transmembrane segment at Gly-45–Ile-65 threads the bilayer. The Cytoplasmic segment spans residues Gln-66–Thr-73. The helical transmembrane segment at Pro-74–Ala-94 threads the bilayer. Residues Pro-95 to Cys-113 are Extracellular-facing. Cys-113 and Cys-205 are disulfide-bonded. A helical membrane pass occupies residues Ala-114–Met-134. The Cytoplasmic portion of the chain corresponds to Ala-135–Cys-157. A helical membrane pass occupies residues Ile-158–Ala-178. The Extracellular portion of the chain corresponds to Thr-179 to Gly-220. The helical transmembrane segment at Phe-221–Ile-241 threads the bilayer. Residues Leu-242–Ala-253 are Cytoplasmic-facing. The helical transmembrane segment at Phe-254 to Met-274 threads the bilayer. Residues Tyr-275–Asp-287 are Extracellular-facing. Residues Lys-288–Leu-308 traverse the membrane as a helical segment. The Cytoplasmic portion of the chain corresponds to Arg-309–Lys-329.

This sequence belongs to the G-protein coupled receptor 1 family.

Its subcellular location is the cell membrane. Functionally, odorant receptor. The chain is Olfactory receptor 5AL1 (OR5AL1) from Homo sapiens (Human).